Reading from the N-terminus, the 247-residue chain is Ribosomal RNA processing protein 36 homolog (247 aa).

Disordered stretches follow at residues 1-29 (MDNQ…HLKD), 62-89 (RTQG…QRVP), 136-188 (SVEK…RELV), and 218-247 (GKLQ…QVDQ). The span at 8 to 23 (SSDDESPTDDCSDEGE) shows a compositional bias: acidic residues. Basic and acidic residues-rich tracts occupy residues 136 to 153 (SVEK…RKNL) and 164 to 174 (ERSRKSAEAKR). Positions 218–240 (GKLQKYLTKRRKKTASKDRRHVP) are enriched in basic residues.

Belongs to the RRP36 family.

The protein localises to the nucleus. Its subcellular location is the nucleolus. Involved in the early processing steps of the pre-rRNA in the maturation pathway leading to the 18S rRNA. The chain is Ribosomal RNA processing protein 36 homolog from Nematostella vectensis (Starlet sea anemone).